The following is a 288-amino-acid chain: Sulfur carrier protein FdhD (288 aa).

The segment at 1 to 23 (MMRCMQSPEVHPAAAGDAEPPTH) is disordered. C127 serves as the catalytic Cysteine persulfide intermediate.

This sequence belongs to the FdhD family.

It is found in the cytoplasm. Its function is as follows. Required for formate dehydrogenase (FDH) activity. Acts as a sulfur carrier protein that transfers sulfur from IscS to the molybdenum cofactor prior to its insertion into FDH. The polypeptide is Sulfur carrier protein FdhD (Cupriavidus necator (strain ATCC 17699 / DSM 428 / KCTC 22496 / NCIMB 10442 / H16 / Stanier 337) (Ralstonia eutropha)).